The primary structure comprises 217 residues: Thiamine-phosphate synthase (217 aa).

4-amino-2-methyl-5-(diphosphooxymethyl)pyrimidine contacts are provided by residues Gln-42–Lys-46 and Asp-77. Mg(2+)-binding residues include Asp-78 and Asp-97. Ser-116 contributes to the 4-amino-2-methyl-5-(diphosphooxymethyl)pyrimidine binding site. Position 143-145 (Thr-143–Ser-145) interacts with 2-[(2R,5Z)-2-carboxy-4-methylthiazol-5(2H)-ylidene]ethyl phosphate. Residue Lys-146 coordinates 4-amino-2-methyl-5-(diphosphooxymethyl)pyrimidine. 2-[(2R,5Z)-2-carboxy-4-methylthiazol-5(2H)-ylidene]ethyl phosphate-binding positions include Gly-174 and Ile-194–Ser-195.

The protein belongs to the thiamine-phosphate synthase family. Mg(2+) serves as cofactor.

The catalysed reaction is 2-[(2R,5Z)-2-carboxy-4-methylthiazol-5(2H)-ylidene]ethyl phosphate + 4-amino-2-methyl-5-(diphosphooxymethyl)pyrimidine + 2 H(+) = thiamine phosphate + CO2 + diphosphate. It catalyses the reaction 2-(2-carboxy-4-methylthiazol-5-yl)ethyl phosphate + 4-amino-2-methyl-5-(diphosphooxymethyl)pyrimidine + 2 H(+) = thiamine phosphate + CO2 + diphosphate. It carries out the reaction 4-methyl-5-(2-phosphooxyethyl)-thiazole + 4-amino-2-methyl-5-(diphosphooxymethyl)pyrimidine + H(+) = thiamine phosphate + diphosphate. It functions in the pathway cofactor biosynthesis; thiamine diphosphate biosynthesis; thiamine phosphate from 4-amino-2-methyl-5-diphosphomethylpyrimidine and 4-methyl-5-(2-phosphoethyl)-thiazole: step 1/1. Its function is as follows. Condenses 4-methyl-5-(beta-hydroxyethyl)thiazole monophosphate (THZ-P) and 2-methyl-4-amino-5-hydroxymethyl pyrimidine pyrophosphate (HMP-PP) to form thiamine monophosphate (TMP). The polypeptide is Thiamine-phosphate synthase (Lactiplantibacillus plantarum (strain ATCC BAA-793 / NCIMB 8826 / WCFS1) (Lactobacillus plantarum)).